We begin with the raw amino-acid sequence, 283 residues long: ATP phosphoribosyltransferase (283 aa).

It belongs to the ATP phosphoribosyltransferase family. Long subfamily. It depends on Mg(2+) as a cofactor.

It localises to the cytoplasm. The enzyme catalyses 1-(5-phospho-beta-D-ribosyl)-ATP + diphosphate = 5-phospho-alpha-D-ribose 1-diphosphate + ATP. Its pathway is amino-acid biosynthesis; L-histidine biosynthesis; L-histidine from 5-phospho-alpha-D-ribose 1-diphosphate: step 1/9. Feedback inhibited by histidine. Its function is as follows. Catalyzes the condensation of ATP and 5-phosphoribose 1-diphosphate to form N'-(5'-phosphoribosyl)-ATP (PR-ATP). Has a crucial role in the pathway because the rate of histidine biosynthesis seems to be controlled primarily by regulation of HisG enzymatic activity. The sequence is that of ATP phosphoribosyltransferase from Rhodococcus erythropolis (strain PR4 / NBRC 100887).